A 330-amino-acid chain; its full sequence is Type II methyltransferase M.HaeIII (330 aa).

An SAM-dependent MTase C5-type domain is found at 1–327 (MNLISLFSGA…KTIKSALEIC (327 aa)). ATP-binding positions include E29 and 50–51 (DI). C71 is a catalytic residue. N260 is an ATP binding site.

Belongs to the class I-like SAM-binding methyltransferase superfamily. C5-methyltransferase family. As to quaternary structure, monomer.

The catalysed reaction is a 2'-deoxycytidine in DNA + S-adenosyl-L-methionine = a 5-methyl-2'-deoxycytidine in DNA + S-adenosyl-L-homocysteine + H(+). A methylase, recognizes the double-stranded sequence 5'-GGCC-3', methylates C-3 on both strands, and protects the DNA from cleavage by the HaeIII endonuclease. This is Type II methyltransferase M.HaeIII (haeIIIM) from Haemophilus aegyptius.